The primary structure comprises 409 residues: MPFRRTLLAASLALLITGQAPLYAAPPLSMDNGTNTLTVQNSNAWVEVSASALQHNIRTLQAELAGKSKLCAVLKADAYGHGIGLVMPSIIAQGVPCVAVASNEEARVVRASGFTGQLVRVRLASLSELEDGLQYDMEELVGSAEFARQADAIAARHGKTLRIHMALNSSGMSRNGVEMATWSGRGEALQITDQKHLKLVALMTHFAVEDKDDVRKGLAAFNEQTDWLIKHARLDRSKLTLHAANSFATLEVPEARLDMVRTGGALFGDTVPARTEYKRAMQFKSHVAAVHSYPAGNTVGYDRTFTLARDSRLANITVGYSDGYRRVFTNKGHVLINGHRVPVVGKVSMNTLMVDVTDFPDVKGGNEVVLFGKQAGGEITQAEMEEINGALLADLYTVWGNSNPKILVD.

Positions 1-24 are cleaved as a signal peptide; that stretch reads MPFRRTLLAASLALLITGQAPLYA. Cysteines 71 and 97 form a disulfide. Lysine 75 serves as the catalytic Proton acceptor. Lysine 75 is modified (N6-(pyridoxal phosphate)lysine). Arginine 174 serves as a coordination point for substrate. The active-site Proton acceptor is tyrosine 301. Methionine 349 lines the substrate pocket.

The protein belongs to the alanine racemase family. Bsr subfamily. Pyridoxal 5'-phosphate serves as cofactor.

It localises to the periplasm. The catalysed reaction is an L-alpha-amino acid = a D-alpha-amino acid. It catalyses the reaction L-lysine = D-lysine. The enzyme catalyses L-arginine = D-arginine. It carries out the reaction L-glutamine = D-glutamine. In terms of biological role, amino-acid racemase able to utilize a broad range of substrates. Reversibly racemizes 9 of the 19 natural chiral amino acids known, including both positively charged amino acids (Lys, Arg and His) and non-beta-branched aliphatic amino acids (Ala, Leu, Met, Ser, Gln and Asn). Among these amino acids, activity is the highest with lysine and arginine, and poor or very poor with the others. Plays a primary role in the catabolism of basic amino acid, that allows P.putida strain KT2440 to grow on L-Lys and L-Arg as the sole source of carbon and nitrogen, through conversion to their respective D-enantiomers. The chain is Broad specificity amino-acid racemase from Pseudomonas putida (strain ATCC 47054 / DSM 6125 / CFBP 8728 / NCIMB 11950 / KT2440).